The sequence spans 596 residues: Phosphomethylpyrimidine synthase 1 (596 aa).

Substrate contacts are provided by residues Asn-228, Met-257, Tyr-286, His-322, 342-344 (SRG), 383-386 (DGLR), and Glu-422. Zn(2+) is bound at residue His-426. Tyr-449 provides a ligand contact to substrate. His-490 contributes to the Zn(2+) binding site. 3 residues coordinate [4Fe-4S] cluster: Cys-570, Cys-573, and Cys-578.

It belongs to the ThiC family. As to quaternary structure, homodimer. [4Fe-4S] cluster is required as a cofactor.

The catalysed reaction is 5-amino-1-(5-phospho-beta-D-ribosyl)imidazole + S-adenosyl-L-methionine = 4-amino-2-methyl-5-(phosphooxymethyl)pyrimidine + CO + 5'-deoxyadenosine + formate + L-methionine + 3 H(+). It participates in cofactor biosynthesis; thiamine diphosphate biosynthesis. Functionally, catalyzes the synthesis of the hydroxymethylpyrimidine phosphate (HMP-P) moiety of thiamine from aminoimidazole ribotide (AIR) in a radical S-adenosyl-L-methionine (SAM)-dependent reaction. This is Phosphomethylpyrimidine synthase 1 from Syntrophotalea carbinolica (strain DSM 2380 / NBRC 103641 / GraBd1) (Pelobacter carbinolicus).